We begin with the raw amino-acid sequence, 146 residues long: Protein STIG1 (146 aa).

The signal sequence occupies residues 1-23 (MAFINLLILIILTLSSTPITTMS). N-linked (GlcNAc...) asparagine glycans are attached at residues asparagine 31, asparagine 61, and asparagine 84.

Belongs to the STIG1 family. Post-translationally, glycosylated. As to expression, expressed exclusively in the stigmatic secretory zone.

It localises to the secreted. Functionally, involved in the temporal regulation of the exudate secretion onto the stigma. The chain is Protein STIG1 from Nicotiana tabacum (Common tobacco).